Reading from the N-terminus, the 67-residue chain is Protein SlyX homolog (67 aa).

This sequence belongs to the SlyX family.

The polypeptide is Protein SlyX homolog (Thiobacillus denitrificans (strain ATCC 25259 / T1)).